A 489-amino-acid polypeptide reads, in one-letter code: 3-octaprenyl-4-hydroxybenzoate carboxy-lyase (489 aa).

Position 172 (N172) interacts with Mn(2+). Prenylated FMN is bound by residues 175–177, 189–191, and 194–195; these read IYR, RWL, and RG. Residue E238 coordinates Mn(2+). Residue D287 is the Proton donor of the active site.

This sequence belongs to the UbiD family. As to quaternary structure, homohexamer. Prenylated FMN is required as a cofactor. Mn(2+) serves as cofactor.

It is found in the cell membrane. The enzyme catalyses a 4-hydroxy-3-(all-trans-polyprenyl)benzoate + H(+) = a 2-(all-trans-polyprenyl)phenol + CO2. It participates in cofactor biosynthesis; ubiquinone biosynthesis. Functionally, catalyzes the decarboxylation of 3-octaprenyl-4-hydroxy benzoate to 2-octaprenylphenol, an intermediate step in ubiquinone biosynthesis. This is 3-octaprenyl-4-hydroxybenzoate carboxy-lyase from Psychromonas ingrahamii (strain DSM 17664 / CCUG 51855 / 37).